The primary structure comprises 382 residues: Galactokinase (382 aa).

Position 34–37 (34–37 (EHTD)) interacts with substrate. Residue 124–130 (GAGLSSS) participates in ATP binding. Residues S130 and E162 each contribute to the Mg(2+) site. The active-site Proton acceptor is the D174. Y223 provides a ligand contact to substrate.

The protein belongs to the GHMP kinase family. GalK subfamily.

It localises to the cytoplasm. The enzyme catalyses alpha-D-galactose + ATP = alpha-D-galactose 1-phosphate + ADP + H(+). Its pathway is carbohydrate metabolism; galactose metabolism. Functionally, catalyzes the transfer of the gamma-phosphate of ATP to D-galactose to form alpha-D-galactose-1-phosphate (Gal-1-P). In Citrobacter koseri (strain ATCC BAA-895 / CDC 4225-83 / SGSC4696), this protein is Galactokinase.